A 166-amino-acid chain; its full sequence is Cofilin-2 (166 aa).

Position 2 is an N-acetylalanine (alanine 2). Serine 3 bears the Phosphoserine mark. The 150-residue stretch at 4–153 folds into the ADF-H domain; the sequence is GVTVNDEVIK…KDRSTLGEKL (150 aa). A Phosphothreonine modification is found at threonine 6. Positions 30–34 match the Nuclear localization signal motif; sequence KKRKK.

This sequence belongs to the actin-binding proteins ADF family. In terms of processing, the phosphorylation of Ser-24 may prevent recognition of the nuclear localization signal.

The protein resides in the nucleus matrix. Its subcellular location is the cytoplasm. The protein localises to the cytoskeleton. In terms of biological role, controls reversibly actin polymerization and depolymerization in a pH-sensitive manner. It has the ability to bind G- and F-actin in a 1:1 ratio of cofilin to actin. It is the major component of intranuclear and cytoplasmic actin rods. This chain is Cofilin-2 (CFL2), found in Bos taurus (Bovine).